Consider the following 176-residue polypeptide: Retinol-binding protein 4-A (176 aa).

The residue at position 1 (Ser1) is an N-acetylserine. Cystine bridges form between Cys3-Cys159, Cys69-Cys173, and Cys119-Cys128. Residue Gln97 coordinates substrate.

It belongs to the calycin superfamily. Lipocalin family.

Its subcellular location is the secreted. Its function is as follows. RBP delivers retinol from the liver stores to the peripheral tissues. In plasma, the RBP-retinol complex interacts with transthyretin, this prevents its loss by filtration through the kidney glomeruli. This Oncorhynchus mykiss (Rainbow trout) protein is Retinol-binding protein 4-A (rbp4a).